The chain runs to 264 residues: Thymidylate synthase (264 aa).

Arg-21 contacts dUMP. His-51 is a (6R)-5,10-methylene-5,6,7,8-tetrahydrofolate binding site. Position 126–127 (126–127) interacts with dUMP; that stretch reads RR. Cys-146 functions as the Nucleophile in the catalytic mechanism. DUMP contacts are provided by residues 166 to 169, Asn-177, and 207 to 209; these read RSAD and HLY. Asp-169 contributes to the (6R)-5,10-methylene-5,6,7,8-tetrahydrofolate binding site. Ala-263 contacts (6R)-5,10-methylene-5,6,7,8-tetrahydrofolate.

The protein belongs to the thymidylate synthase family. Bacterial-type ThyA subfamily. As to quaternary structure, homodimer.

Its subcellular location is the cytoplasm. It carries out the reaction dUMP + (6R)-5,10-methylene-5,6,7,8-tetrahydrofolate = 7,8-dihydrofolate + dTMP. It functions in the pathway pyrimidine metabolism; dTTP biosynthesis. In terms of biological role, catalyzes the reductive methylation of 2'-deoxyuridine-5'-monophosphate (dUMP) to 2'-deoxythymidine-5'-monophosphate (dTMP) while utilizing 5,10-methylenetetrahydrofolate (mTHF) as the methyl donor and reductant in the reaction, yielding dihydrofolate (DHF) as a by-product. This enzymatic reaction provides an intracellular de novo source of dTMP, an essential precursor for DNA biosynthesis. The chain is Thymidylate synthase from Polynucleobacter asymbioticus (strain DSM 18221 / CIP 109841 / QLW-P1DMWA-1) (Polynucleobacter necessarius subsp. asymbioticus).